The following is a 452-amino-acid chain: Probable glycine dehydrogenase (decarboxylating) subunit 1 (452 aa).

Belongs to the GcvP family. N-terminal subunit subfamily. As to quaternary structure, the glycine cleavage system is composed of four proteins: P, T, L and H. In this organism, the P 'protein' is a heterodimer of two subunits.

The catalysed reaction is N(6)-[(R)-lipoyl]-L-lysyl-[glycine-cleavage complex H protein] + glycine + H(+) = N(6)-[(R)-S(8)-aminomethyldihydrolipoyl]-L-lysyl-[glycine-cleavage complex H protein] + CO2. Its function is as follows. The glycine cleavage system catalyzes the degradation of glycine. The P protein binds the alpha-amino group of glycine through its pyridoxal phosphate cofactor; CO(2) is released and the remaining methylamine moiety is then transferred to the lipoamide cofactor of the H protein. This chain is Probable glycine dehydrogenase (decarboxylating) subunit 1, found in Novosphingobium aromaticivorans (strain ATCC 700278 / DSM 12444 / CCUG 56034 / CIP 105152 / NBRC 16084 / F199).